A 160-amino-acid chain; its full sequence is Endoribonuclease YbeY (160 aa).

Zn(2+) contacts are provided by His112, His116, and His122. The interval 141 to 160 (ELGHPDPYACDDEEPPSKEK) is disordered.

The protein belongs to the endoribonuclease YbeY family. Zn(2+) serves as cofactor.

It is found in the cytoplasm. In terms of biological role, single strand-specific metallo-endoribonuclease involved in late-stage 70S ribosome quality control and in maturation of the 3' terminus of the 16S rRNA. This Pseudomonas paraeruginosa (strain DSM 24068 / PA7) (Pseudomonas aeruginosa (strain PA7)) protein is Endoribonuclease YbeY.